Reading from the N-terminus, the 127-residue chain is Glycine cleavage system H protein (127 aa).

The 82-residue stretch at 24–105 folds into the Lipoyl-binding domain; the sequence is TALVGITDFA…YGSGWMVKMK (82 aa). Residue Lys-65 is modified to N6-lipoyllysine.

Belongs to the GcvH family. The glycine cleavage system is composed of four proteins: P, T, L and H. (R)-lipoate serves as cofactor.

Functionally, the glycine cleavage system catalyzes the degradation of glycine. The H protein shuttles the methylamine group of glycine from the P protein to the T protein. In Chlorobium luteolum (strain DSM 273 / BCRC 81028 / 2530) (Pelodictyon luteolum), this protein is Glycine cleavage system H protein.